A 497-amino-acid chain; its full sequence is Uridine 5'-monophosphate synthase (497 aa).

Residues 8–226 (TRNGALKRNL…KLEINSELEN (219 aa)) are OPRTase. The domain linker stretch occupies residues 227–232 (LSSLPY). Residues 233 to 496 (VENVRTPLAE…WDALTRSDDS (264 aa)) form an OMPdecase region. UMP-binding positions include Asp-271 and 293-295 (KLH). Residue Lys-293 participates in orotidine 5'-phosphate binding. Residues Asp-324, Lys-326, and Asp-329 each act as for OMPdecase activity in the active site. Residues Lys-326, Asp-329, Thr-333, Ser-387, 446–448 (QQW), and 466–467 (GR) each bind orotidine 5'-phosphate. Residues Asp-329, Thr-333, Ser-387, 446–448 (QQW), and 466–467 (GR) contribute to the UMP site.

This sequence in the N-terminal section; belongs to the purine/pyrimidine phosphoribosyltransferase family. The protein in the C-terminal section; belongs to the OMP decarboxylase family. In terms of tissue distribution, expressed in intestine and in neurons near the nerve ring and rectum.

The protein resides in the cytoplasm. It carries out the reaction orotidine 5'-phosphate + diphosphate = orotate + 5-phospho-alpha-D-ribose 1-diphosphate. The catalysed reaction is orotidine 5'-phosphate + H(+) = UMP + CO2. It participates in pyrimidine metabolism; UMP biosynthesis via de novo pathway; UMP from orotate: step 1/2. It functions in the pathway pyrimidine metabolism; UMP biosynthesis via de novo pathway; UMP from orotate: step 2/2. Functionally, bifunctional enzyme which catalyzes the formation of UMP from orotate in the de novo pathway of pyrimidine biosynthesis. May also form UMP from uracil. Regulates the size of gut granules during embryonic development. Involved in resistance to DNA damaging agents including UV-C and X-ray radiation. The sequence is that of Uridine 5'-monophosphate synthase from Caenorhabditis elegans.